The primary structure comprises 270 residues: MSGTKIHPTALVEKGAQLGENVRVGPFCHISSEAVIGDECSLTSHVVIMGKTMLGAKSKVFSHAVLGADPQNNKHKGGATILSIGKNCMIREGVTMHRGSDSSTGMTVVGDNCQFFCYAHIAHDCHVGNHVTFANNAMIAGHVTVGDYVIIGGGAAVHQFVRVGHHAFIGGVSALVGDLIPYGTAVGVQAKLAGLNIIGMKRAGLERQDIHALRHAVAMLFDHSKPFKERVNDVASCYSSSRSVADVVRFIKEEGKRFYCTPKFGGDRIK.

This sequence belongs to the transferase hexapeptide repeat family. LpxA subfamily. In terms of assembly, homotrimer.

The protein localises to the cytoplasm. It catalyses the reaction a (3R)-hydroxyacyl-[ACP] + UDP-N-acetyl-alpha-D-glucosamine = a UDP-3-O-[(3R)-3-hydroxyacyl]-N-acetyl-alpha-D-glucosamine + holo-[ACP]. The protein operates within glycolipid biosynthesis; lipid IV(A) biosynthesis; lipid IV(A) from (3R)-3-hydroxytetradecanoyl-[acyl-carrier-protein] and UDP-N-acetyl-alpha-D-glucosamine: step 1/6. In terms of biological role, involved in the biosynthesis of lipid A, a phosphorylated glycolipid that anchors the lipopolysaccharide to the outer membrane of the cell. This is Acyl-[acyl-carrier-protein]--UDP-N-acetylglucosamine O-acyltransferase from Bartonella tribocorum (strain CIP 105476 / IBS 506).